Consider the following 111-residue polypeptide: BET1-like protein (111 aa).

Residues 1 to 86 (MADWARAQSP…MARSGRDNRK (86 aa)) lie on the Cytoplasmic side of the membrane. Residues serine 9 and serine 37 each carry the phosphoserine modification. In terms of domain architecture, t-SNARE coiled-coil homology spans 15 to 77 (EILDRENKRM…TGSVKRFSTM (63 aa)). Residues 87-107 (LLCGMAVGLIVAFFILSYFLS) form a helical; Anchor for type IV membrane protein membrane-spanning segment. Residues 108–111 (RART) are Lumenal-facing.

Component of a SNARE complex consisting of STX5, YKT6, GOSR1 and BET1L. Interacts with STX5.

It localises to the golgi apparatus membrane. It is found in the golgi apparatus. The protein localises to the trans-Golgi network membrane. In terms of biological role, vesicle SNARE required for targeting and fusion of retrograde transport vesicles with the Golgi complex. Required for the integrity of the Golgi complex. This chain is BET1-like protein, found in Pongo abelii (Sumatran orangutan).